A 306-amino-acid chain; its full sequence is MIKRNLNDLLSFVAVAREGTFTRAAAQLGVTQSALSQSISGLEARLQIRLLTRTTRSVSPTAAGERLLNAIGNRFDEIEAELDELSALRDKPSGTVRITCGDHIQRTLLLPRLTPLLLEYPDIKVEFDINYGFRDIVADRFDAGVRLGDTIDKDMIAVPIGPPVRMAVVAAPAYFAAHPKPRSPRDLVDHNCINMRMQSGGGLYAWDFQRKDRHVNVRVDGQLIFNTSPNIVDAALAGLGIAWLPEEEFAPHIEEGRLLRVLENWCPLFPGYYLYYPNRRQPSPAFSLVVDALRYTRPRGTTIGGG.

The region spanning M1–T61 is the HTH lysR-type domain. A DNA-binding region (H-T-H motif) is located at residues F21 to S40.

This sequence belongs to the LysR transcriptional regulatory family.

Its function is as follows. May have a role in the regulation of oprD expression. The sequence is that of Putative transcriptional regulator from Pseudomonas aeruginosa (strain ATCC 15692 / DSM 22644 / CIP 104116 / JCM 14847 / LMG 12228 / 1C / PRS 101 / PAO1).